The sequence spans 225 residues: Phosphoserine phosphatase (225 aa).

Met1 carries the post-translational modification N-acetylmethionine. Asp20 functions as the Nucleophile in the catalytic mechanism. Positions 20 and 22 each coordinate Mg(2+). 20 to 22 (DVD) provides a ligand contact to L-serine. Residue Asp22 is the Proton donor of the active site. An O-phospho-L-serine-binding site is contributed by Met52. Phosphate is bound at residue Gly53. Residues 109–111 (SGG) and Lys158 each bind L-serine. O-phospho-L-serine-binding positions include 109 to 111 (SGG) and Lys158. Asp179 contributes to the Mg(2+) binding site. Thr182 serves as a coordination point for O-phospho-L-serine. Thr182 is a phosphate binding site.

The protein belongs to the HAD-like hydrolase superfamily. SerB family. In terms of assembly, homodimer. Mg(2+) serves as cofactor.

It localises to the cytoplasm. Its subcellular location is the cytosol. It catalyses the reaction O-phospho-L-serine + H2O = L-serine + phosphate. It carries out the reaction O-phospho-D-serine + H2O = D-serine + phosphate. The protein operates within amino-acid biosynthesis; L-serine biosynthesis; L-serine from 3-phospho-D-glycerate: step 3/3. Its function is as follows. Catalyzes the last irreversible step in the biosynthesis of L-serine from carbohydrates, the dephosphorylation of O-phospho-L-serine to L-serine. L-serine can then be used in protein synthesis, to produce other amino acids, in nucleotide metabolism or in glutathione synthesis, or can be racemized to D-serine, a neuromodulator. May also act on O-phospho-D-serine. This Bos taurus (Bovine) protein is Phosphoserine phosphatase.